Consider the following 807-residue polypeptide: AP-5 complex subunit zeta-1 (807 aa).

In terms of assembly, probably part of the adaptor protein complex 5 (AP-5) a tetramer composed of AP5B1, AP5M1, AP5S1 and AP5Z1. Interacts with ZFYVE26 and SPG11.

It is found in the cytoplasm. The protein resides in the nucleus. Functionally, as part of AP-5, a probable fifth adaptor protein complex it may be involved in endosomal transport. The polypeptide is AP-5 complex subunit zeta-1 (Ap5z1) (Mus musculus (Mouse)).